Consider the following 282-residue polypeptide: Bis(5'-nucleosyl)-tetraphosphatase, symmetrical (282 aa).

The protein belongs to the Ap4A hydrolase family.

It carries out the reaction P(1),P(4)-bis(5'-adenosyl) tetraphosphate + H2O = 2 ADP + 2 H(+). Its function is as follows. Hydrolyzes diadenosine 5',5'''-P1,P4-tetraphosphate to yield ADP. The chain is Bis(5'-nucleosyl)-tetraphosphatase, symmetrical from Shigella dysenteriae serotype 1 (strain Sd197).